The following is a 231-amino-acid chain: Putative Nudix hydrolase FPV054 (231 aa).

The Nudix hydrolase domain occupies S74–F217. The Nudix box signature appears at G125–D146. Position 131 (E131) interacts with Mg(2+). The Nucleophile role is filled by E140. Mg(2+) contacts are provided by E144 and D165.

It belongs to the Nudix hydrolase family. Mg(2+) serves as cofactor. It depends on Mn(2+) as a cofactor.

Its function is as follows. Decapping enzyme required for the removal of the 5'-end m7GpppN cap tethered to viral and host mRNAs to allow their decay in cells. May therefore accelerate viral and cellular mRNA turnover to eliminate competing host mRNAs and allow stage-specific synthesis of viral proteins. Acceleration of the turnover of cellular transcripts may even promote the shutoff of host protein synthesis. Does not cleave unmethylated RNAs or RNAs shorter than 24 nucleotides. The protein is Putative Nudix hydrolase FPV054 of Vertebrata (FPV).